The following is a 193-amino-acid chain: 3-isopropylmalate dehydratase small subunit (193 aa).

Belongs to the LeuD family. LeuD type 1 subfamily. In terms of assembly, heterodimer of LeuC and LeuD.

The enzyme catalyses (2R,3S)-3-isopropylmalate = (2S)-2-isopropylmalate. The protein operates within amino-acid biosynthesis; L-leucine biosynthesis; L-leucine from 3-methyl-2-oxobutanoate: step 2/4. In terms of biological role, catalyzes the isomerization between 2-isopropylmalate and 3-isopropylmalate, via the formation of 2-isopropylmaleate. The sequence is that of 3-isopropylmalate dehydratase small subunit from Bacillus cereus (strain ATCC 10987 / NRS 248).